The sequence spans 495 residues: Glycerol kinase (495 aa).

T11 is an ADP binding site. ATP-binding residues include T11, T12, and S13. T11 contacts sn-glycerol 3-phosphate. Position 15 (R15) interacts with ADP. Positions 81, 82, 133, and 242 each coordinate sn-glycerol 3-phosphate. The glycerol site is built by R81, E82, Y133, D242, and Q243. 2 residues coordinate ADP: T264 and G307. Positions 264, 307, 311, and 408 each coordinate ATP. 2 residues coordinate ADP: G408 and N412.

This sequence belongs to the FGGY kinase family.

It catalyses the reaction glycerol + ATP = sn-glycerol 3-phosphate + ADP + H(+). The protein operates within polyol metabolism; glycerol degradation via glycerol kinase pathway; sn-glycerol 3-phosphate from glycerol: step 1/1. Inhibited by fructose 1,6-bisphosphate (FBP). Its function is as follows. Key enzyme in the regulation of glycerol uptake and metabolism. Catalyzes the phosphorylation of glycerol to yield sn-glycerol 3-phosphate. This Acinetobacter baylyi (strain ATCC 33305 / BD413 / ADP1) protein is Glycerol kinase.